A 430-amino-acid chain; its full sequence is Tyrosine--tRNA ligase (430 aa).

Position 32 (Tyr32) interacts with L-tyrosine. Residues 37–46 carry the 'HIGH' region motif; that stretch reads PTADSLHIGH. L-tyrosine is bound by residues Tyr172 and Gln176. The 'KMSKS' region motif lies at 232-236; sequence KFGKT. Residue Lys235 participates in ATP binding. In terms of domain architecture, S4 RNA-binding spans 362 to 429; the sequence is VKAVDLFVDN…GKKNYYLIIA (68 aa).

This sequence belongs to the class-I aminoacyl-tRNA synthetase family. TyrS type 1 subfamily. As to quaternary structure, homodimer.

The protein resides in the cytoplasm. The catalysed reaction is tRNA(Tyr) + L-tyrosine + ATP = L-tyrosyl-tRNA(Tyr) + AMP + diphosphate + H(+). Catalyzes the attachment of tyrosine to tRNA(Tyr) in a two-step reaction: tyrosine is first activated by ATP to form Tyr-AMP and then transferred to the acceptor end of tRNA(Tyr). The polypeptide is Tyrosine--tRNA ligase (Bacteroides fragilis (strain YCH46)).